Reading from the N-terminus, the 442-residue chain is Trigger factor (442 aa).

One can recognise a PPIase FKBP-type domain in the interval Gly-170–Pro-250.

Belongs to the FKBP-type PPIase family. Tig subfamily.

Its subcellular location is the cytoplasm. The catalysed reaction is [protein]-peptidylproline (omega=180) = [protein]-peptidylproline (omega=0). Its function is as follows. Involved in protein export. Acts as a chaperone by maintaining the newly synthesized protein in an open conformation. Functions as a peptidyl-prolyl cis-trans isomerase. The chain is Trigger factor (tig) from Treponema pallidum (strain Nichols).